The following is a 241-amino-acid chain: Demethylmenaquinone methyltransferase (241 aa).

Residues threonine 68, aspartate 88, and 114 to 115 contribute to the S-adenosyl-L-methionine site; that span reads DA.

This sequence belongs to the class I-like SAM-binding methyltransferase superfamily. MenG/UbiE family.

It carries out the reaction a 2-demethylmenaquinol + S-adenosyl-L-methionine = a menaquinol + S-adenosyl-L-homocysteine + H(+). The protein operates within quinol/quinone metabolism; menaquinone biosynthesis; menaquinol from 1,4-dihydroxy-2-naphthoate: step 2/2. Methyltransferase required for the conversion of demethylmenaquinol (DMKH2) to menaquinol (MKH2). This chain is Demethylmenaquinone methyltransferase, found in Deinococcus radiodurans (strain ATCC 13939 / DSM 20539 / JCM 16871 / CCUG 27074 / LMG 4051 / NBRC 15346 / NCIMB 9279 / VKM B-1422 / R1).